The chain runs to 415 residues: Tyrosine--tRNA ligase (415 aa).

Residue Tyr-40 coordinates L-tyrosine. A 'HIGH' region motif is present at residues 45 to 54 (ATAKSLHVGS). L-tyrosine is bound by residues Tyr-178 and Gln-182. The 'KMSKS' region signature appears at 238 to 242 (KMGKS). An ATP-binding site is contributed by Lys-241. Residues 350–414 (ASIVQLIVKT…GKKRHALVQL (65 aa)) enclose the S4 RNA-binding domain.

The protein belongs to the class-I aminoacyl-tRNA synthetase family. TyrS type 1 subfamily. Homodimer.

Its subcellular location is the cytoplasm. The enzyme catalyses tRNA(Tyr) + L-tyrosine + ATP = L-tyrosyl-tRNA(Tyr) + AMP + diphosphate + H(+). Catalyzes the attachment of tyrosine to tRNA(Tyr) in a two-step reaction: tyrosine is first activated by ATP to form Tyr-AMP and then transferred to the acceptor end of tRNA(Tyr). This chain is Tyrosine--tRNA ligase, found in Ruegeria pomeroyi (strain ATCC 700808 / DSM 15171 / DSS-3) (Silicibacter pomeroyi).